The following is a 289-amino-acid chain: uncharacterized protein (289 aa).

The span at 1-20 (MNPMDRQTEGQEPQHQDRQP) shows a compositional bias: basic and acidic residues. The disordered stretch occupies residues 1 to 39 (MNPMDRQTEGQEPQHQDRQPGIESKMNPLPLSEDEDYRG). NADP(+) is bound at residue 49-73 (IITGGDSGIGRAAAIAFAKEGADIS). Ser181 contributes to the substrate binding site. Tyr194 (proton acceptor) is an active-site residue.

It belongs to the short-chain dehydrogenases/reductases (SDR) family.

This is an uncharacterized protein from Bacillus subtilis (strain 168).